The chain runs to 557 residues: 2-isopropylmalate synthase (557 aa).

Residues 33 to 307 enclose the Pyruvate carboxyltransferase domain; sequence PIWCSSDLRD…DPQLDFSDID (275 aa). The Mg(2+) site is built by aspartate 42, histidine 246, histidine 248, and asparagine 282. The interval 439-557 is regulatory domain; it reads ANAPYALVSH…SLSQQQAKAA (119 aa).

It belongs to the alpha-IPM synthase/homocitrate synthase family. LeuA type 2 subfamily. Homodimer. It depends on Mg(2+) as a cofactor.

The protein localises to the cytoplasm. The catalysed reaction is 3-methyl-2-oxobutanoate + acetyl-CoA + H2O = (2S)-2-isopropylmalate + CoA + H(+). The protein operates within amino-acid biosynthesis; L-leucine biosynthesis; L-leucine from 3-methyl-2-oxobutanoate: step 1/4. Functionally, catalyzes the condensation of the acetyl group of acetyl-CoA with 3-methyl-2-oxobutanoate (2-ketoisovalerate) to form 3-carboxy-3-hydroxy-4-methylpentanoate (2-isopropylmalate). The sequence is that of 2-isopropylmalate synthase from Pseudomonas entomophila (strain L48).